The sequence spans 171 residues: Macro domain-containing protein RSc0334 (171 aa).

The Macro domain maps to 1–171; it reads MPIPTVTLRA…LYETALNEAR (171 aa).

It belongs to the MacroD-type family.

The chain is Macro domain-containing protein RSc0334 from Ralstonia nicotianae (strain ATCC BAA-1114 / GMI1000) (Ralstonia solanacearum).